We begin with the raw amino-acid sequence, 280 residues long: Golgi to ER traffic protein 2 (280 aa).

Basic and acidic residues-rich tracts occupy residues Met1–Gln17, Ser44–Lys62, and Ala71–Lys80. The tract at residues Met1–Lys80 is disordered. The Cytoplasmic portion of the chain corresponds to Met1–Thr146. The helical transmembrane segment at Leu147–Leu166 threads the bilayer. At Thr167 to Ser191 the chain is on the lumenal side. The helical transmembrane segment at Phe192–Ser211 threads the bilayer. Residues Val212 to Asn258 are Cytoplasmic-facing. A helical membrane pass occupies residues Ile259 to Gln279. Residue Ile280 is a topological domain, lumenal.

This sequence belongs to the GET2 family. Component of the Golgi to ER traffic (GET) complex, which is composed of GET1, GET2 and GET3. Within the complex, GET1 and GET2 form a heterotetramer which is stabilized by phosphatidylinositol binding and which binds to the GET3 homodimer.

Its subcellular location is the endoplasmic reticulum membrane. The protein localises to the golgi apparatus membrane. In terms of biological role, required for the post-translational delivery of tail-anchored (TA) proteins to the endoplasmic reticulum. Together with GET1, acts as a membrane receptor for soluble GET3, which recognizes and selectively binds the transmembrane domain of TA proteins in the cytosol. The GET complex cooperates with the HDEL receptor ERD2 to mediate the ATP-dependent retrieval of resident ER proteins that contain a C-terminal H-D-E-L retention signal from the Golgi to the ER. The polypeptide is Golgi to ER traffic protein 2 (Candida glabrata (strain ATCC 2001 / BCRC 20586 / JCM 3761 / NBRC 0622 / NRRL Y-65 / CBS 138) (Yeast)).